The primary structure comprises 293 residues: Biphenyl-2,3-diol 1,2-dioxygenase (293 aa).

2 VOC domains span residues 5-119 and 143-265; these read RLGY…IYYG and GIGH…FGWG. Residues His146, His210, and Glu261 each coordinate Fe cation.

It belongs to the extradiol ring-cleavage dioxygenase family. In terms of assembly, homooctamer. It depends on Fe(2+) as a cofactor.

The enzyme catalyses biphenyl-2,3-diol + O2 = 2-hydroxy-6-oxo-6-phenylhexa-2,4-dienoate + H(+). It functions in the pathway xenobiotic degradation; biphenyl degradation; 2-hydroxy-2,4-pentadienoate and benzoate from biphenyl: step 3/4. The protein is Biphenyl-2,3-diol 1,2-dioxygenase (bphC) of Pseudomonas sp. (strain KKS102).